Consider the following 116-residue polypeptide: Protein Wnt-5a (116 aa).

A lipid anchor (O-palmitoleoyl serine; by PORCN) is attached at Ser-1. N-linked (GlcNAc...) asparagine glycosylation is found at Asn-69 and Asn-83. Cys-82 and Cys-97 are oxidised to a cystine.

Belongs to the Wnt family. Palmitoleoylation is required for efficient binding to frizzled receptors. Depalmitoleoylation leads to Wnt signaling pathway inhibition.

The protein localises to the secreted. It is found in the extracellular space. The protein resides in the extracellular matrix. Functionally, ligand for members of the frizzled family of seven transmembrane receptors. Can activate or inhibit canonical Wnt signaling, depending on receptor context. Required during embryogenesis for extension of the primary anterior-posterior axis. This Meleagris gallopavo (Wild turkey) protein is Protein Wnt-5a (WNT5A).